The following is a 39-amino-acid chain: Photosystem II reaction center protein J (39 aa).

A helical membrane pass occupies residues 9-29 (LWLVVTFGGIVVLTVLGIFIY).

Belongs to the PsbJ family. As to quaternary structure, PSII is composed of 1 copy each of membrane proteins PsbA, PsbB, PsbC, PsbD, PsbE, PsbF, PsbH, PsbI, PsbJ, PsbK, PsbL, PsbM, PsbT, PsbY, PsbZ, Psb30/Ycf12, at least 3 peripheral proteins of the oxygen-evolving complex and a large number of cofactors. It forms dimeric complexes.

It localises to the plastid. The protein resides in the chloroplast thylakoid membrane. Functionally, one of the components of the core complex of photosystem II (PSII). PSII is a light-driven water:plastoquinone oxidoreductase that uses light energy to abstract electrons from H(2)O, generating O(2) and a proton gradient subsequently used for ATP formation. It consists of a core antenna complex that captures photons, and an electron transfer chain that converts photonic excitation into a charge separation. The polypeptide is Photosystem II reaction center protein J (Cyanidium caldarium (Red alga)).